We begin with the raw amino-acid sequence, 89 residues long: Gamma-bungarotoxin (89 aa).

The signal sequence occupies residues 1 to 21 (MKTLLLTLVVVTIVCLDLGYT). Disulfide bonds link C24–C45, C27–C32, C38–C66, C70–C81, and C82–C87. The Cell attachment site motif lies at 54-56 (RGD).

This sequence belongs to the three-finger toxin family. Ancestral subfamily. Orphan group V sub-subfamily. In terms of tissue distribution, expressed by the venom gland.

Its subcellular location is the secreted. In terms of biological role, exhibits M2 muscarinic acetylcholine receptor (CHRM2)-blocking activity, but has a weak binding activity toward nicotinic AChR. Moreover, it inhibits collagen-induced platelet aggregation. The chain is Gamma-bungarotoxin from Bungarus multicinctus (Many-banded krait).